Reading from the N-terminus, the 133-residue chain is MAAKPEWVEQSPEEIEELIVKLHKEGQSTSQIGITLRDQHGIPNTKAVLGEKITDILKRNGTDFEYPEDLLNLIKRAVNIREHLEENPKDIHTKRGLIKIESKIRRLVKYYTRNNVLPEGWRYDPKTAALLVK.

It belongs to the universal ribosomal protein uS15 family. As to quaternary structure, part of the 30S ribosomal subunit.

This is Small ribosomal subunit protein uS15 from Methanosphaera stadtmanae (strain ATCC 43021 / DSM 3091 / JCM 11832 / MCB-3).